The chain runs to 359 residues: Phosphoribosylformylglycinamidine cyclo-ligase (359 aa).

This sequence belongs to the AIR synthase family.

The protein resides in the cytoplasm. The enzyme catalyses 2-formamido-N(1)-(5-O-phospho-beta-D-ribosyl)acetamidine + ATP = 5-amino-1-(5-phospho-beta-D-ribosyl)imidazole + ADP + phosphate + H(+). The protein operates within purine metabolism; IMP biosynthesis via de novo pathway; 5-amino-1-(5-phospho-D-ribosyl)imidazole from N(2)-formyl-N(1)-(5-phospho-D-ribosyl)glycinamide: step 2/2. In Brucella canis (strain ATCC 23365 / NCTC 10854 / RM-666), this protein is Phosphoribosylformylglycinamidine cyclo-ligase.